The sequence spans 338 residues: Hydroxyproline O-galactosyltransferase HPGT1 (338 aa).

At 1 to 12 the chain is on the cytoplasmic side; it reads MARKGSSIRLSS. Residues 13–32 traverse the membrane as a helical; Signal-anchor for type II membrane protein segment; it reads SRISTLLLFMFATFASFYVA. Topologically, residues 33–338 are lumenal; it reads GRLWQESQTR…WSSEAICAGV (306 aa).

Belongs to the glycosyltransferase 31 family. Requires Mn(2+) as cofactor. In terms of tissue distribution, expressed in roots, rosette leaves, cauline leaves, stems, flowers and siliques.

It is found in the golgi apparatus membrane. The protein operates within protein modification; protein glycosylation. Its function is as follows. Possesses hydroxyproline O-galactosyltransferase activity. Transfers galactose from UDP-galactose to hydroxyproline residues in the arabinogalactan proteins (AGPs). Is specific for AGPs containing non-contiguous peptidyl hydroxyproline residues. The addition of galactose onto the peptidyl hydroxyproline residues in AGP core proteins represents the first committed step in arabinogalactan polysaccharide addition. AGP glycans play essential roles in both vegetative and reproductive plant growth. The polypeptide is Hydroxyproline O-galactosyltransferase HPGT1 (Arabidopsis thaliana (Mouse-ear cress)).